A 513-amino-acid chain; its full sequence is ATP synthase subunit alpha 2 (513 aa).

Residue 169–176 (GDRQCGKT) participates in ATP binding.

It belongs to the ATPase alpha/beta chains family. As to quaternary structure, F-type ATPases have 2 components, CF(1) - the catalytic core - and CF(0) - the membrane proton channel. CF(1) has five subunits: alpha(3), beta(3), gamma(1), delta(1), epsilon(1). CF(0) has three main subunits: a(1), b(2) and c(9-12). The alpha and beta chains form an alternating ring which encloses part of the gamma chain. CF(1) is attached to CF(0) by a central stalk formed by the gamma and epsilon chains, while a peripheral stalk is formed by the delta and b chains.

The protein resides in the cell inner membrane. The enzyme catalyses ATP + H2O + 4 H(+)(in) = ADP + phosphate + 5 H(+)(out). Its function is as follows. Produces ATP from ADP in the presence of a proton gradient across the membrane. The alpha chain is a regulatory subunit. This Paraburkholderia xenovorans (strain LB400) protein is ATP synthase subunit alpha 2.